We begin with the raw amino-acid sequence, 150 residues long: Lymphotoxin-beta (150 aa).

The region spanning 1 to 149 (AWITGQGLGW…GKTFFGAVMV (149 aa)) is the THD domain. The N-linked (GlcNAc...) asparagine glycan is linked to Asn-128.

It belongs to the tumor necrosis factor family. As to quaternary structure, heterotrimer of either two LTB and one LTA subunits or (less prevalent) two LTA and one LTB subunits.

It localises to the membrane. Functionally, cytokine that binds to LTBR/TNFRSF3. May play a specific role in immune response regulation. Provides the membrane anchor for the attachment of the heterotrimeric complex to the cell surface. This chain is Lymphotoxin-beta (LTB), found in Sus scrofa (Pig).